The chain runs to 119 residues: NADH-quinone oxidoreductase subunit A (119 aa).

3 consecutive transmembrane segments (helical) span residues Tyr-7–Gly-27, Leu-63–Val-83, and Ile-88–Ala-108.

Belongs to the complex I subunit 3 family. In terms of assembly, NDH-1 is composed of 14 different subunits. Subunits NuoA, H, J, K, L, M, N constitute the membrane sector of the complex.

The protein localises to the cell inner membrane. It carries out the reaction a quinone + NADH + 5 H(+)(in) = a quinol + NAD(+) + 4 H(+)(out). In terms of biological role, NDH-1 shuttles electrons from NADH, via FMN and iron-sulfur (Fe-S) centers, to quinones in the respiratory chain. The immediate electron acceptor for the enzyme in this species is believed to be ubiquinone. Couples the redox reaction to proton translocation (for every two electrons transferred, four hydrogen ions are translocated across the cytoplasmic membrane), and thus conserves the redox energy in a proton gradient. The sequence is that of NADH-quinone oxidoreductase subunit A from Burkholderia ambifaria (strain MC40-6).